A 391-amino-acid chain; its full sequence is Elongation factor Tu (391 aa).

Positions 10-201 (KPHVNIGTIG…AVDEYIPTPA (192 aa)) constitute a tr-type G domain. The segment at 19–26 (GHVDHGKT) is G1. 19–26 (GHVDHGKT) contacts GTP. Threonine 26 is a binding site for Mg(2+). The interval 55–59 (GITIS) is G2. Residues 76-79 (DCPG) form a G3 region. GTP contacts are provided by residues 76–80 (DCPGH) and 131–134 (NKVD). The tract at residues 131-134 (NKVD) is G4. A G5 region spans residues 169-171 (SAL).

The protein belongs to the TRAFAC class translation factor GTPase superfamily. Classic translation factor GTPase family. EF-Tu/EF-1A subfamily. As to quaternary structure, monomer.

Its subcellular location is the cytoplasm. It catalyses the reaction GTP + H2O = GDP + phosphate + H(+). Its function is as follows. GTP hydrolase that promotes the GTP-dependent binding of aminoacyl-tRNA to the A-site of ribosomes during protein biosynthesis. The sequence is that of Elongation factor Tu from Cereibacter sphaeroides (strain ATCC 17025 / ATH 2.4.3) (Rhodobacter sphaeroides).